The primary structure comprises 476 residues: MSIRTPPRLLELAGRSLLRDQALAMSTLEELPTELFPPLFMEAFSRRRCEALKLMVQAWPFRRLPLRPLIKMPCLEAFQAVLDGLDALLTQGVHPRRWKLQVLDLQDVCENFWMVWSEAMAHGCFLNAKRNKKPVQDCPRMRGQQPLTVFVELWLKNRTLDEYLTCLLLWVKQRKDLLHLCCKKLKILGMPFRNIRSILKMVNLDCIQEVEVNCKWVLPILTQFTPYLGHMRNLQKLVLSHMDVSRYVSPEQKKEIVTQFTTQFLKLCCLQKLSMNSVSFLEGHLDQLLSCLKTSLKVLTITNCVLLESDLKHLSQCPSISQLKTLDLSGIRLTNYSLVPLQILLEKVAATLEYLDLDDCGIIDSQVNAILPALSRCFELNTFSFCGNPISMATLENLLSHTIILKNLCVELYPAPRESYDADGTLCWSRFPQIRAELMKRVRDLRHPKRILFCTDCCPDCGNRSFYDLEADQCCC.

One copy of the LRR 1; degenerate repeat lies at 97–124 (RWKLQVLDLQDVCENFWMVWSEAMAHGC). An LRR 2; degenerate repeat occupies 179–203 (HLCCKKLKILGMPFRNIRSILKMVN). Residues 204–230 (LDCIQEVEVNCKWVLPILTQFTPYLGH) form an LRR 3; degenerate repeat. An LRR 4; degenerate repeat occupies 231–266 (MRNLQKLVLSHMDVSRYVSPEQKKEIVTQFTTQFLK). LRR repeat units lie at residues 267–292 (LCCL…LSCL), 293–324 (KTSL…SQLK), 325–345 (TLDL…QILL), 349–376 (AATL…ALSR), and 377–401 (CFEL…LLSH).

Belongs to the PRAME family.

This is PRAME family member 5 from Homo sapiens (Human).